An 89-amino-acid chain; its full sequence is Glutamyl-tRNA(Gln) amidotransferase subunit C (89 aa).

It belongs to the GatC family. Heterotrimer of A, B and C subunits.

It catalyses the reaction L-glutamyl-tRNA(Gln) + L-glutamine + ATP + H2O = L-glutaminyl-tRNA(Gln) + L-glutamate + ADP + phosphate + H(+). It carries out the reaction L-aspartyl-tRNA(Asn) + L-glutamine + ATP + H2O = L-asparaginyl-tRNA(Asn) + L-glutamate + ADP + phosphate + 2 H(+). In terms of biological role, allows the formation of correctly charged Asn-tRNA(Asn) or Gln-tRNA(Gln) through the transamidation of misacylated Asp-tRNA(Asn) or Glu-tRNA(Gln) in organisms which lack either or both of asparaginyl-tRNA or glutaminyl-tRNA synthetases. The reaction takes place in the presence of glutamine and ATP through an activated phospho-Asp-tRNA(Asn) or phospho-Glu-tRNA(Gln). In Thermus thermophilus (strain ATCC 27634 / DSM 579 / HB8), this protein is Glutamyl-tRNA(Gln) amidotransferase subunit C.